We begin with the raw amino-acid sequence, 477 residues long: Tripartite motif-containing protein 72 (477 aa).

Residues Leu-14, Pro-17, Pro-29, Cys-31, Thr-34, Gln-37, Thr-53, Pro-56, Gly-86, Leu-89, Val-97, Glu-100, Leu-105, Gly-108, Gly-114, and Lys-117 each contribute to the Zn(2+) site. An RING-type zinc finger spans residues 16–59 (CPLCLELFRAPVTPECGHTFCQGCLTGAPKNQDQNGSTPCPTCQ). The B box-type zinc-finger motif lies at 83 to 124 (VPKGHCLEHLDPLSVYCEQDKELICGVCASLGKHKGHNIITA). Residues 135–232 (LPQQQVILQE…QMDGVLKDVE (98 aa)) are a coiled coil. A B30.2/SPRY domain is found at 272-476 (DEFKFQVWRK…LKIFYPPAEQ (205 aa)).

This sequence belongs to the TRIM/RBCC family. In terms of assembly, homodimer. Homooligomer; disulfide-linked. Oligomerizes on the phospholipid membrane. In terms of processing, disulfide bond formation at Cys-244 occurs in case of membrane damage that cause the entry of the oxidized milieu of the extracellular space, resulting in homooligomerization.

It is found in the cell membrane. The protein resides in the sarcolemma. Its subcellular location is the cytoplasmic vesicle membrane. The enzyme catalyses S-ubiquitinyl-[E2 ubiquitin-conjugating enzyme]-L-cysteine + [acceptor protein]-L-lysine = [E2 ubiquitin-conjugating enzyme]-L-cysteine + N(6)-ubiquitinyl-[acceptor protein]-L-lysine.. It participates in protein modification; protein ubiquitination. With respect to regulation, specifically binds phosphatidylserine. The binding to phospholipids enhances ubiquitination activity. Muscle-specific E3 ubiquitin-protein ligase that plays a central role in cell membrane repair by nucleating the assembly of the repair machinery at injury sites. Acts as a sensor of oxidation: upon membrane damage, entry of extracellular oxidative environment results in disulfide bond formation and homooligomerization at the injury site. This oligomerization acts as a nucleation site for recruitment of TRIM72-containing vesicles to the injury site, leading to membrane patch formation. Probably acts upstream of the Ca(2+)-dependent membrane resealing process. Required for transport of DYSF to sites of cell injury during repair patch formation. Regulates membrane budding and exocytosis. May be involved in the regulation of the mobility of KCNB1-containing endocytic vesicles. The protein is Tripartite motif-containing protein 72 (trim72) of Xenopus tropicalis (Western clawed frog).